We begin with the raw amino-acid sequence, 153 residues long: TM2 domain-containing protein DDB_G0277895 (153 aa).

Residues 3-50 enclose the TM2 domain; it reads QKSVCVTYLLWLFFGLFGIHRFYLNRPCSGVLYLFTCGCFFIGWFIDI. A run of 2 helical transmembrane segments spans residues 6-26 and 33-53; these read VCVTYLLWLFFGLFGIHRFYL and VLYLFTCGCFFIGWFIDICLI. Residues 85-153 are disordered; sequence GSPQQQPYGA…GNYPPPYGPQ (69 aa). Tandem repeats lie at residues 89 to 96, 97 to 104, 105 to 112, 113 to 120, 121 to 128, and 129 to 136. Positions 89–136 are 6 X 8 AA tandem repeat of Q-Q-P-Y-G-A-P-P; sequence QQPYGAPPQQPYGAPPQQPYGAPPQQPYGAPPQQPYGAPPPQPYGAPP. Positions 93–153 are enriched in pro residues; the sequence is GAPPQQPYGA…GNYPPPYGPQ (61 aa).

The protein belongs to the TM2 family.

Its subcellular location is the membrane. The chain is TM2 domain-containing protein DDB_G0277895 from Dictyostelium discoideum (Social amoeba).